The following is a 188-amino-acid chain: MKISANSIRTGNILVYNNDLWVVSKTPEHTQPGKGGAYVQVEMKNLKTGTKRNERFSSANYLEKAELEQKDYQFLYFEGDDLVLMDTKHFDQINISKEMLEEKLSFLTENMIVKVEFYNDKPLNIELPPTVILEISETDPVIKGATATASYKSAILENGIKVKVPQYLEIGEKIVVKTDDMTYVERAK.

Belongs to the elongation factor P family.

It is found in the cytoplasm. The protein operates within protein biosynthesis; polypeptide chain elongation. In terms of biological role, involved in peptide bond synthesis. Stimulates efficient translation and peptide-bond synthesis on native or reconstituted 70S ribosomes in vitro. Probably functions indirectly by altering the affinity of the ribosome for aminoacyl-tRNA, thus increasing their reactivity as acceptors for peptidyl transferase. This chain is Elongation factor P (efp), found in Rickettsia conorii (strain ATCC VR-613 / Malish 7).